Reading from the N-terminus, the 297-residue chain is MSDIAIIDPHFHLWDLETNYYPWLSDGVKPSAFGDYTAINKTYLIEDFLADAKNQNLVKAVHLDVGFDPTNPAGETKWLQGVADKHGFPHGIVGYADFRKPDVGDLLDEHMQYANFRGIRQSMNFHTDGAKTYLNEPEVSRTPEWRQGFKELARRGLSYDLQLYYWQMEEFLELARDFPDVQIILNHTGMQVDGPSHFEGWRKAMKTLAQAPNVACKISGLGMGNWNWTSESIRPYVEEAIAAFGVDRAMFASNFPVDKLFSSYDAIWNAFKKITVGFSVSERSALFHDNAATFYRV.

Belongs to the metallo-dependent hydrolases superfamily.

This is an uncharacterized protein from Sinorhizobium fredii (strain NBRC 101917 / NGR234).